A 366-amino-acid chain; its full sequence is Hydroxyproline O-arabinosyltransferase 1 (366 aa).

A helical; Signal-anchor transmembrane segment spans residues 6–26 (TLFYPLLITLSVALITYNIII).

In terms of tissue distribution, ubiquitous.

The protein localises to the golgi apparatus. It is found in the cis-Golgi network membrane. It catalyses the reaction trans-4-hydroxy-L-prolyl-[protein] + UDP-beta-L-arabinofuranose = O-(beta-L-arabinofuranosyl)-trans-4-hydroxy-L-prolyl-[protein] + UDP + H(+). Its function is as follows. Glycosyltransferase involved in the O-arabinosylation of several proteins including extensins and small signaling peptides. Catalyzes the transfer of the initial L-arabinose to the hydroxyl group of Hyp residues. Contributes redundantly with HPAT2 and HPAT3 to arabinosylation of EXT3. This Arabidopsis thaliana (Mouse-ear cress) protein is Hydroxyproline O-arabinosyltransferase 1.